Here is a 225-residue protein sequence, read N- to C-terminus: Holliday junction branch migration complex subunit RuvA (225 aa).

Residues 1 to 71 (MISWINGDLV…EDSDLLFGFT (71 aa)) form a domain I region. Residues 72–150 (SNEQKNFFIE…SEILSEEEKS (79 aa)) are domain II. Positions 151 to 161 (KGELEIKDPEI) are flexible linker. The segment at 161 to 225 (INKMIEDLQL…LDEDSSNIAR (65 aa)) is domain III.

This sequence belongs to the RuvA family. As to quaternary structure, homotetramer. Forms an RuvA(8)-RuvB(12)-Holliday junction (HJ) complex. HJ DNA is sandwiched between 2 RuvA tetramers; dsDNA enters through RuvA and exits via RuvB. An RuvB hexamer assembles on each DNA strand where it exits the tetramer. Each RuvB hexamer is contacted by two RuvA subunits (via domain III) on 2 adjacent RuvB subunits; this complex drives branch migration. In the full resolvosome a probable DNA-RuvA(4)-RuvB(12)-RuvC(2) complex forms which resolves the HJ.

The protein localises to the cytoplasm. Functionally, the RuvA-RuvB-RuvC complex processes Holliday junction (HJ) DNA during genetic recombination and DNA repair, while the RuvA-RuvB complex plays an important role in the rescue of blocked DNA replication forks via replication fork reversal (RFR). RuvA specifically binds to HJ cruciform DNA, conferring on it an open structure. The RuvB hexamer acts as an ATP-dependent pump, pulling dsDNA into and through the RuvAB complex. HJ branch migration allows RuvC to scan DNA until it finds its consensus sequence, where it cleaves and resolves the cruciform DNA. This chain is Holliday junction branch migration complex subunit RuvA, found in Prochlorococcus marinus (strain MIT 9301).